The primary structure comprises 294 residues: MNTSSQFQQLEKLGEGTYATVYKGRNRTTGQLVALKEINLDSEEGTPSTAIREISLMKELKHENIVTLYDVIHTENKLNLVFEYMDKDLKKFMDTNGNKGALETKQVKWFMYQLLRGILFCHDNRVLHRDLKPQNLLINAKGQLKLADFGLARAFGIPVNTFSNEVVTLWYRAPDVLLGSRTYSTSIDIWSAGCIMAEMFTGRPLFPGSSNDDQLQHIFKLMGTPNESTWPNISSLPNYRSNFQVYAPQDLRVIIPQIDNVALDLLLSLLQLKPENRITARQSLEHPWFAEYHQ.

Positions 7 to 289 constitute a Protein kinase domain; sequence FQQLEKLGEG…ARQSLEHPWF (283 aa). ATP contacts are provided by residues 13–21 and lysine 36; that span reads LGEGTYATV. The active-site Proton acceptor is the aspartate 130.

It belongs to the protein kinase superfamily. CMGC Ser/Thr protein kinase family. CDC2/CDKX subfamily. Interacts with a number of cyclins.

It catalyses the reaction L-seryl-[protein] + ATP = O-phospho-L-seryl-[protein] + ADP + H(+). It carries out the reaction L-threonyl-[protein] + ATP = O-phospho-L-threonyl-[protein] + ADP + H(+). When phosphate concentrations are high it phosphorylates the PHO4 transcription factor thus establishing repression. The protein is Negative regulator of the PHO system (PHO85) of Yarrowia lipolytica (strain CLIB 122 / E 150) (Yeast).